A 538-amino-acid polypeptide reads, in one-letter code: Spindle pole body protein CSA6 (538 aa).

Disordered regions lie at residues 1–31 (MEDS…TSDL) and 57–129 (QNIS…KYQD). 2 stretches are compositionally biased toward basic and acidic residues: residues 18–30 (PEIK…KTSD) and 57–68 (QNISDSEHDLTP). Polar residues-rich tracts occupy residues 86–96 (KFSSSIPQKPT) and 104–122 (TSPT…SGPN). Residues 144-237 (KQEQNLKLEN…RNERDELVKD (94 aa)) adopt a coiled-coil conformation. Basic and acidic residues predominate over residues 304-323 (KKISEPSAAVEKDTTSEDKT). Disordered regions lie at residues 304-338 (KKIS…TPRM) and 355-458 (SSNN…STKY). 2 stretches are compositionally biased toward polar residues: residues 355–392 (SSNN…SAAY) and 407–425 (TNFY…QSSQ). Basic and acidic residues predominate over residues 426–444 (SDERPETFELPHVAKDHWL). Residues 446-457 (RPTSERSTQSTK) are compositionally biased toward polar residues.

It is found in the cytoplasm. The protein localises to the cytoskeleton. The protein resides in the microtubule organizing center. It localises to the spindle pole body. Its function is as follows. Plays a role in mitotic spindle pole body organization, possibly at the point of spindle pole body separation. Required for mitotic exit. The polypeptide is Spindle pole body protein CSA6 (Candida albicans (strain SC5314 / ATCC MYA-2876) (Yeast)).